The following is a 237-amino-acid chain: Ribosomal RNA small subunit methyltransferase G (237 aa).

S-adenosyl-L-methionine-binding positions include Gly78, Phe83, 129–130 (AE), and Arg148.

Belongs to the methyltransferase superfamily. RNA methyltransferase RsmG family.

The protein resides in the cytoplasm. Functionally, specifically methylates the N7 position of a guanine in 16S rRNA. The polypeptide is Ribosomal RNA small subunit methyltransferase G (Clostridium kluyveri (strain ATCC 8527 / DSM 555 / NBRC 12016 / NCIMB 10680 / K1)).